Here is a 450-residue protein sequence, read N- to C-terminus: Protein DA1-related 3 (450 aa).

Residues Met-1–Gln-46 are a coiled coil. Composition is skewed to basic and acidic residues over residues Lys-27–Val-47 and Thr-56–Val-69. A disordered region spans residues Lys-27–Gly-87.

This chain is Protein DA1-related 3 (DAR3), found in Arabidopsis thaliana (Mouse-ear cress).